We begin with the raw amino-acid sequence, 221 residues long: Adenylate kinase (221 aa).

An ATP-binding site is contributed by 10–15; it reads GAGKGT. Residues 30–59 form an NMP region; the sequence is STGDMLRAAVKAGTPLGVEAKKVMDAGGLV. AMP is bound by residues T31, R36, 57–59, 85–88, and Q92; these read GLV and GFPR. Residues 122–159 form an LID region; that stretch reads GRRVHVASGRTYHVKYNPPKTEGVDDETGEALIQRDDD. Residues R123 and 132–133 contribute to the ATP site; that span reads TY. AMP-binding residues include R156 and R167. An ATP-binding site is contributed by G207.

The protein belongs to the adenylate kinase family. As to quaternary structure, monomer.

The protein localises to the cytoplasm. It carries out the reaction AMP + ATP = 2 ADP. Its pathway is purine metabolism; AMP biosynthesis via salvage pathway; AMP from ADP: step 1/1. Its function is as follows. Catalyzes the reversible transfer of the terminal phosphate group between ATP and AMP. Plays an important role in cellular energy homeostasis and in adenine nucleotide metabolism. The chain is Adenylate kinase from Cupriavidus necator (strain ATCC 17699 / DSM 428 / KCTC 22496 / NCIMB 10442 / H16 / Stanier 337) (Ralstonia eutropha).